A 366-amino-acid chain; its full sequence is Quinolinate synthase (366 aa).

Residues His44 and Ser61 each coordinate iminosuccinate. Cys108 lines the [4Fe-4S] cluster pocket. Residues Tyr139 to Asn141 and Ser160 each bind iminosuccinate. Residue Cys228 coordinates [4Fe-4S] cluster. Iminosuccinate contacts are provided by residues His254–Glu256 and Thr271. [4Fe-4S] cluster is bound at residue Cys318.

It belongs to the quinolinate synthase family. Type 3 subfamily. It depends on [4Fe-4S] cluster as a cofactor.

The protein localises to the cytoplasm. The enzyme catalyses iminosuccinate + dihydroxyacetone phosphate = quinolinate + phosphate + 2 H2O + H(+). The protein operates within cofactor biosynthesis; NAD(+) biosynthesis; quinolinate from iminoaspartate: step 1/1. Functionally, catalyzes the condensation of iminoaspartate with dihydroxyacetone phosphate to form quinolinate. This chain is Quinolinate synthase, found in Listeria monocytogenes serovar 1/2a (strain ATCC BAA-679 / EGD-e).